A 141-amino-acid chain; its full sequence is Hemoglobin subunit alpha (141 aa).

The Globin domain maps to 1–141 (VLSGDDKSNL…VSTVLTSKYR (141 aa)). Ser-3 carries the post-translational modification Phosphoserine. Residues Lys-7 and Lys-11 each carry the N6-succinyllysine modification. At Lys-16 the chain carries N6-acetyllysine; alternate. At Lys-16 the chain carries N6-succinyllysine; alternate. Tyr-24 carries the phosphotyrosine modification. Residue Lys-40 is modified to N6-succinyllysine. Position 49 is a phosphoserine (Ser-49). His-58 contacts O2. His-87 serves as a coordination point for heme b. Ser-102 bears the Phosphoserine mark. Thr-108 carries the post-translational modification Phosphothreonine. 2 positions are modified to phosphoserine: Ser-124 and Ser-131. Phosphothreonine occurs at positions 134 and 137. Phosphoserine is present on Ser-138.

It belongs to the globin family. Heterotetramer of two alpha chains and two beta chains. As to expression, red blood cells.

Involved in oxygen transport from the lung to the various peripheral tissues. The sequence is that of Hemoglobin subunit alpha from Microtus pennsylvanicus (Meadow vole).